Reading from the N-terminus, the 403-residue chain is Phosphoglycerate kinase (403 aa).

Residues 21–23 (DFN), arginine 36, 59–62 (HLGR), arginine 119, and arginine 159 contribute to the substrate site. ATP is bound by residues lysine 214, glycine 301, glutamate 332, and 359-362 (GGDS).

Belongs to the phosphoglycerate kinase family. In terms of assembly, monomer.

The protein resides in the cytoplasm. The enzyme catalyses (2R)-3-phosphoglycerate + ATP = (2R)-3-phospho-glyceroyl phosphate + ADP. It functions in the pathway carbohydrate degradation; glycolysis; pyruvate from D-glyceraldehyde 3-phosphate: step 2/5. The chain is Phosphoglycerate kinase from Lactobacillus johnsonii (strain CNCM I-12250 / La1 / NCC 533).